A 473-amino-acid chain; its full sequence is Ribulose bisphosphate carboxylase large chain (473 aa).

2 residues coordinate substrate: Asn-116 and Thr-166. Lys-168 acts as the Proton acceptor in catalysis. Lys-170 is a binding site for substrate. Residues Lys-194, Asp-196, and Glu-197 each coordinate Mg(2+). Lys-194 carries the post-translational modification N6-carboxylysine. His-287 functions as the Proton acceptor in the catalytic mechanism. Residues Arg-288, His-320, and Ser-372 each contribute to the substrate site.

It belongs to the RuBisCO large chain family. Type I subfamily. As to quaternary structure, heterohexadecamer of 8 large chains and 8 small chains. Mg(2+) is required as a cofactor.

It carries out the reaction 2 (2R)-3-phosphoglycerate + 2 H(+) = D-ribulose 1,5-bisphosphate + CO2 + H2O. It catalyses the reaction D-ribulose 1,5-bisphosphate + O2 = 2-phosphoglycolate + (2R)-3-phosphoglycerate + 2 H(+). Functionally, ruBisCO catalyzes two reactions: the carboxylation of D-ribulose 1,5-bisphosphate, the primary event in carbon dioxide fixation, as well as the oxidative fragmentation of the pentose substrate. Both reactions occur simultaneously and in competition at the same active site. This is Ribulose bisphosphate carboxylase large chain from Hydrogenophaga pseudoflava (Pseudomonas carboxydoflava).